Reading from the N-terminus, the 98-residue chain is Large ribosomal subunit protein uL23 (98 aa).

This sequence belongs to the universal ribosomal protein uL23 family. Part of the 50S ribosomal subunit. Contacts protein L29, and trigger factor when it is bound to the ribosome.

Its function is as follows. One of the early assembly proteins it binds 23S rRNA. One of the proteins that surrounds the polypeptide exit tunnel on the outside of the ribosome. Forms the main docking site for trigger factor binding to the ribosome. The polypeptide is Large ribosomal subunit protein uL23 (Rickettsia typhi (strain ATCC VR-144 / Wilmington)).